The sequence spans 593 residues: MLLLWLRALCRRFQHVPRRVPSRQVSRGSKASRAGWGETSKSSVKWKQLEHKGPCFAPAYEPLPDGVRFFYDGKPVRLSLAAEEVATFYGKMLHLECTTKEVFRRNFFSDWQKEMTAEERKLITHLDKCDFSEIHRHFMERAEARRTLPREQKQKLKEEAEKLQQEFGYCILDGHREKIGNFKTEPPGLFRGRGDHPKMGMLKRRVMPEDVVINCSRDSKIPEPPAGHQWKEVRSDNTVMWLAAWVENIQNSFKYIILNPSSKPKGEMDWQKYEVARRLKGVVDKIRAQYQADWKSPEMKKRQLAVALYFIDKLALRTGNEKEEGETADTVGCCSLRVEHVRLHTPADGQEHVVELDFLGKDSIRYKNHVTVEKLVFQNLQHFMEDKDPRDDLFDALTTSSLNKHLQDLMEGLTAKVFRTYNASITLQEQLRVLTRAEDSLTCKVLAYNRANRAVAVLCNHQRAIPKTFEESMQTLQKKIETKKAQVAEAQVELQKAETDLRMRGDSKSKSFLQKQQRLLKLEEQLARLCTKATDKEENKQVALGTAKLNYLDPRISIAWCKRFGVPVEKIYNKTQRERFAWAFNQAGEDFEF.

The transit peptide at 1-43 (MLLLWLRALCRRFQHVPRRVPSRQVSRGSKASRAGWGETSKSS) directs the protein to the mitochondrion. 3 interaction with DNA regions span residues 254 to 255 (KY), 317 to 322 (RTGNEK), and 414 to 416 (TAK). A Topo IB-type catalytic domain is found at 261–593 (SSKPKGEMDW…FNQAGEDFEF (333 aa)). The active-site O-(3'-phospho-DNA)-tyrosine intermediate is Tyr551.

It belongs to the type IB topoisomerase family. Ca(2+) is required as a cofactor. It depends on Mg(2+) as a cofactor.

It localises to the mitochondrion. The enzyme catalyses ATP-independent breakage of single-stranded DNA, followed by passage and rejoining.. In terms of biological role, releases the supercoiling and torsional tension of DNA introduced during duplication of mitochondrial DNA by transiently cleaving and rejoining one strand of the DNA duplex. Introduces a single-strand break via transesterification at a target site in duplex DNA. The scissile phosphodiester is attacked by the catalytic tyrosine of the enzyme, resulting in the formation of a DNA-(3'-phosphotyrosyl)-enzyme intermediate and the expulsion of a 5'-OH DNA strand. The free DNA strand then rotates around the intact phosphodiester bond on the opposing strand, thus removing DNA supercoils. Finally, in the religation step, the DNA 5'-OH attacks the covalent intermediate to expel the active-site tyrosine and restore the DNA phosphodiester backbone. The chain is DNA topoisomerase I, mitochondrial (Top1mt) from Rattus norvegicus (Rat).